Reading from the N-terminus, the 224-residue chain is Cytidylate kinase (224 aa).

11–19 is an ATP binding site; that stretch reads GPASAGKST.

This sequence belongs to the cytidylate kinase family. Type 1 subfamily.

It is found in the cytoplasm. The catalysed reaction is CMP + ATP = CDP + ADP. It catalyses the reaction dCMP + ATP = dCDP + ADP. In Ligilactobacillus salivarius (strain UCC118) (Lactobacillus salivarius), this protein is Cytidylate kinase.